The sequence spans 417 residues: Acetate kinase (417 aa).

Asn9 contacts Mg(2+). Lys16 is a binding site for ATP. Residue Arg90 participates in substrate binding. Asp147 serves as the catalytic Proton donor/acceptor. ATP is bound by residues 207–211 (HIGNG), 282–284 (DLR), and 330–334 (GIGEN). Mg(2+) is bound at residue Glu384.

The protein belongs to the acetokinase family. Homodimer. Requires Mg(2+) as cofactor. Mn(2+) is required as a cofactor.

The protein resides in the cytoplasm. It catalyses the reaction acetate + ATP = acetyl phosphate + ADP. It functions in the pathway metabolic intermediate biosynthesis; acetyl-CoA biosynthesis; acetyl-CoA from acetate: step 1/2. Catalyzes the formation of acetyl phosphate from acetate and ATP. Can also catalyze the reverse reaction. The polypeptide is Acetate kinase (Staphylococcus epidermidis (strain ATCC 35984 / DSM 28319 / BCRC 17069 / CCUG 31568 / BM 3577 / RP62A)).